A 1331-amino-acid chain; its full sequence is Receptor-type adenylate cyclase B (1331 aa).

Residues 1-33 are Cytoplasmic-facing; it reads MYADATHPRRACWCGAGGVSGCVRQRHAYRCSR. A helical transmembrane segment spans residues 34–54; that stretch reads LLAGVLLIVGALTLTLAVSTV. Residues 55-898 lie on the Extracellular side of the membrane; sequence PAAWAAGAVA…SHALTPAQRG (844 aa). N-linked (GlcNAc...) asparagine glycans are attached at residues Asn-255, Asn-429, Asn-558, Asn-574, and Asn-657. Residues 899–919 form a helical membrane-spanning segment; it reads GAIAGIALLTVILLAVAGLAL. Over 920–1331 the chain is Cytoplasmic; that stretch reads YCCMDNRNND…PTVCNVRGAH (412 aa). The Guanylate cyclase domain occupies 940–1094; the sequence is TLLFTDIESS…DTSNMAARTE (155 aa). The Mg(2+) site is built by Asp-945 and Asp-988.

The protein belongs to the adenylyl cyclase class-3 family. The cofactor is Mg(2+).

Its subcellular location is the membrane. The catalysed reaction is ATP = 3',5'-cyclic AMP + diphosphate. Its function is as follows. Could act as a receptor for an unknown ligand. The sequence is that of Receptor-type adenylate cyclase B (RAC-B) from Leishmania donovani.